A 151-amino-acid chain; its full sequence is uncharacterized protein (151 aa).

A disordered region spans residues 1-24 (MHAKTKKLGTDTSYKRPQVTAQEQ).

This is an uncharacterized protein from Acanthamoeba polyphaga mimivirus (APMV).